The primary structure comprises 312 residues: Metaxin-1 homolog (312 aa).

Residues 282-302 form a helical membrane-spanning segment; the sequence is ILFTIGALVLSVAFAIHTGLI.

The protein belongs to the metaxin family. Associates with the mitochondrial contact site and cristae organizing system (MICOS) complex (also known as MINOS or MitOS complex).

The protein localises to the mitochondrion outer membrane. In terms of biological role, involved in transport of proteins into the mitochondrion. Essential for embryonic development. This is Metaxin-1 homolog from Caenorhabditis briggsae.